A 371-amino-acid polypeptide reads, in one-letter code: Cytochrome b (371 aa).

Transmembrane regions (helical) follow at residues 25–45 (FGSMLLTCTALQISTGFFLAV), 69–90 (WIMQNLHAIGASLFFLCIYIHI), 105–125 (WLSGTTLLIILMATAFFGYVL), and 170–190 (FFALHFILPFLITSLSSIHII). Residues histidine 75 and histidine 89 each coordinate heme b. The heme b site is built by histidine 174 and histidine 188. Histidine 193 provides a ligand contact to a ubiquinone. Helical transmembrane passes span 218–238 (YKDMFMISSMITLLFIVLSFM), 280–300 (LGGTLALLMSVIILTTTPFTH), 312–332 (LTQALFWTLIATFITITWTAT), and 339–358 (FTLISQVASVTYFSFFIINP).

This sequence belongs to the cytochrome b family. As to quaternary structure, the cytochrome bc1 complex contains 3 respiratory subunits (MT-CYB, CYC1 and UQCRFS1), 2 core proteins (UQCRC1 and UQCRC2) and probably 6 low-molecular weight proteins. Heme b serves as cofactor.

It is found in the mitochondrion inner membrane. Functionally, component of the ubiquinol-cytochrome c reductase complex (complex III or cytochrome b-c1 complex) that is part of the mitochondrial respiratory chain. The b-c1 complex mediates electron transfer from ubiquinol to cytochrome c. Contributes to the generation of a proton gradient across the mitochondrial membrane that is then used for ATP synthesis. The polypeptide is Cytochrome b (MT-CYB) (Toxicocalamus preussi (Preuss's forest snake)).